Here is a 359-residue protein sequence, read N- to C-terminus: Peptide chain release factor 1 (359 aa).

Q236 bears the N5-methylglutamine mark.

Belongs to the prokaryotic/mitochondrial release factor family. Post-translationally, methylated by PrmC. Methylation increases the termination efficiency of RF1.

The protein resides in the cytoplasm. Functionally, peptide chain release factor 1 directs the termination of translation in response to the peptide chain termination codons UAG and UAA. This chain is Peptide chain release factor 1, found in Streptococcus pyogenes serotype M12 (strain MGAS2096).